A 431-amino-acid chain; its full sequence is Tol-Pal system protein TolB (431 aa).

The first 26 residues, 1 to 26 (MSLMTKLGFRALVASCLITAGSAANA), serve as a signal peptide directing secretion. A disordered region spans residues 411-431 (PQILSVQGGSVREPSWGPFMQ).

Belongs to the TolB family. The Tol-Pal system is composed of five core proteins: the inner membrane proteins TolA, TolQ and TolR, the periplasmic protein TolB and the outer membrane protein Pal. They form a network linking the inner and outer membranes and the peptidoglycan layer.

It is found in the periplasm. Its function is as follows. Part of the Tol-Pal system, which plays a role in outer membrane invagination during cell division and is important for maintaining outer membrane integrity. This Burkholderia lata (strain ATCC 17760 / DSM 23089 / LMG 22485 / NCIMB 9086 / R18194 / 383) protein is Tol-Pal system protein TolB.